The primary structure comprises 1028 residues: Unconventional myosin-Ic (1028 aa).

M1 carries the post-translational modification N-acetylmethionine. One can recognise a Myosin motor domain in the interval 12-696 (GVQDFVLLEN…TLFATEDALE (685 aa)). ATP is bound by residues N53, Y61, 104–113 (SGESGAGKTE), and 157–161 (NDNSS). K348 is modified (N6-methyllysine). The tract at residues 573-595 (LSKLMEILMSKQPSYVRCIKPND) is actin-binding. 2 IQ domains span residues 699-728 (KHSI…SAVE) and 722-751 (MKHS…AVDV). In terms of domain architecture, TH1 spans 850-1024 (KDNYPQSVPR…NGHLSVVAPR (175 aa)).

This sequence belongs to the TRAFAC class myosin-kinesin ATPase superfamily. Myosin family. As to quaternary structure, interacts (via its IQ motifs) with calmodulin. As to expression, expressed in brain and the sacculus of the internal ear.

It localises to the cytoplasm. The protein localises to the cell membrane. It is found in the cell projection. The protein resides in the ruffle membrane. Its subcellular location is the cytoplasmic vesicle. It localises to the stereocilium membrane. Its function is as follows. Myosins are actin-based motor molecules with ATPase activity. Unconventional myosins serve in intracellular movements. Their highly divergent tails are presumed to bind to membranous compartments, which would be moved relative to actin filaments. The sequence is that of Unconventional myosin-Ic (Myo1c) from Aquarana catesbeiana (American bullfrog).